The sequence spans 82 residues: MLVLSRKINQSIVIGDNIEIMLVDIRGDQIKLGINAPKNVKIFRKEVYEEIESQNLEASKEATADKLNILSNFVKNKFGKKQ.

Belongs to the CsrA/RsmA family. Homodimer; the beta-strands of each monomer intercalate to form a hydrophobic core, while the alpha-helices form wings that extend away from the core.

It is found in the cytoplasm. A translational regulator that binds mRNA to regulate translation initiation and/or mRNA stability. Usually binds in the 5'-UTR at or near the Shine-Dalgarno sequence preventing ribosome-binding, thus repressing translation. Its main target seems to be the major flagellin gene, while its function is anatagonized by FliW. This chain is Translational regulator CsrA, found in Brachyspira hyodysenteriae (strain ATCC 49526 / WA1).